Reading from the N-terminus, the 462-residue chain is Anthranilate synthase component 1 (462 aa).

Residues S37 and 244 to 246 each bind L-tryptophan; that span reads PYM. Position 279–280 (279–280) interacts with chorismate; the sequence is GT. Position 306 (E306) interacts with Mg(2+). Residues Y394, R414, 428–430, and G430 contribute to the chorismate site; that span reads GAG. A Mg(2+)-binding site is contributed by E443.

This sequence belongs to the anthranilate synthase component I family. As to quaternary structure, heterotetramer consisting of two non-identical subunits: a beta subunit (TrpG) and a large alpha subunit (TrpE). Mg(2+) is required as a cofactor.

It catalyses the reaction chorismate + L-glutamine = anthranilate + pyruvate + L-glutamate + H(+). It functions in the pathway amino-acid biosynthesis; L-tryptophan biosynthesis; L-tryptophan from chorismate: step 1/5. Its activity is regulated as follows. Feedback inhibited by tryptophan. In terms of biological role, part of a heterotetrameric complex that catalyzes the two-step biosynthesis of anthranilate, an intermediate in the biosynthesis of L-tryptophan. In the first step, the glutamine-binding beta subunit (TrpG) of anthranilate synthase (AS) provides the glutamine amidotransferase activity which generates ammonia as a substrate that, along with chorismate, is used in the second step, catalyzed by the large alpha subunit of AS (TrpE) to produce anthranilate. In the absence of TrpG, TrpE can synthesize anthranilate directly from chorismate and high concentrations of ammonia. This Thermus thermophilus (strain ATCC 27634 / DSM 579 / HB8) protein is Anthranilate synthase component 1 (trpE).